The chain runs to 492 residues: Solute carrier family 2, facilitated glucose transporter member 1 (492 aa).

Position 1 is an N-acetylmethionine (Met1). Residues 1-11 lie on the Cytoplasmic side of the membrane; it reads MEPSSKKVTGR. A helical transmembrane segment spans residues 12–33; it reads LMLAVGGAVLGSLQFGYNTGVI. The Extracellular segment spans residues 34–66; that stretch reads NAPQKVIEEFYNQTWNHRYGESIPSTTLTTLWS. N-linked (GlcNAc...) asparagine glycosylation occurs at Asn45. Residues 67–87 form a helical membrane-spanning segment; the sequence is LSVAIFSVGGMIGSFSVGLFV. Topologically, residues 88-90 are cytoplasmic; that stretch reads NRF. The helical transmembrane segment at 91–112 threads the bilayer; sequence GRRNSMLMMNLLAFVSAVLMGF. The Extracellular portion of the chain corresponds to 113–120; it reads SKLGKSFE. A helical membrane pass occupies residues 121–144; it reads MLILGRFIIGVYCGLTTGFVPMYV. Residues 145 to 155 are Cytoplasmic-facing; the sequence is GEVSPTALRGA. Residues 156–176 traverse the membrane as a helical segment; sequence LGTLHQLGIVVGILIAQVFGL. Residue Gln161 participates in D-glucose binding. Topologically, residues 177-185 are extracellular; that stretch reads DSIMGNADL. A helical transmembrane segment spans residues 186 to 206; it reads WPLLLSVIFIPALLQCILLPF. Topologically, residues 207–271 are cytoplasmic; sequence CPESPRFLLI…LFRSPAYRQP (65 aa). The residue at position 226 (Ser226) is a Phosphoserine. The chain crosses the membrane as a helical span at residues 272 to 293; that stretch reads ILIAVVLQLSQQLSGINAVFYY. Residues 282–283 and Asn288 contribute to the D-glucose site; that span reads QQ. Over 294 to 306 the chain is Extracellular; sequence STSIFEKAGVQQP. The helical transmembrane segment at 307–328 threads the bilayer; that stretch reads VYATIGSGIVNTAFTVVSLFVV. Asn317 contacts D-glucose. Residues 329-334 are Cytoplasmic-facing; it reads ERAGRR. A helical transmembrane segment spans residues 335 to 355; the sequence is TLHLIGLAGMAGCAVLMTIAL. The Extracellular segment spans residues 356-365; that stretch reads ALLEQLPWMS. The helical transmembrane segment at 366–388 threads the bilayer; the sequence is YLSIVAIFGFVAFFEVGPGPIPW. D-glucose contacts are provided by Glu380 and Trp388. The Cytoplasmic portion of the chain corresponds to 389-401; it reads FIVAELFSQGPRP. Residues 402-422 traverse the membrane as a helical segment; the sequence is AAVAVAGFSNWTSNFIVGMCF. Residues 423-429 are Extracellular-facing; it reads QYVEQLC. The chain crosses the membrane as a helical span at residues 430-450; it reads GPYVFIIFTVLLVLFFIFTYF. The Cytoplasmic segment spans residues 451 to 492; it reads KVPETKGRTFDEIASGFRQGGASQSDKTPEELFHPLGADSQV. At Ser465 the chain carries Phosphoserine. Residues 468–492 form a disordered region; that stretch reads RQGGASQSDKTPEELFHPLGADSQV. Residue Thr478 is modified to Phosphothreonine. Ser490 carries the phosphoserine modification.

It belongs to the major facilitator superfamily. Sugar transporter (TC 2.A.1.1) family. Glucose transporter subfamily. As to quaternary structure, found in a complex with ADD2, DMTN and SLC2A1. Interacts (via C-terminus cytoplasmic region) with DMTN. Interacts with SNX27; the interaction is required when endocytosed to prevent degradation in lysosomes and promote recycling to the plasma membrane. Interacts with STOM. Interacts with GIPC (via PDZ domain). Interacts with SGTA (via Gln-rich region). Interacts with isoform 1 of BSG. Interacts with SMIM43; the interaction may promote SLC2A1-mediated glucose transport to meet the energy needs of mesendoderm differentiation. Phosphorylation at Ser-226 by PKC promotes glucose uptake by increasing cell membrane localization. As to expression, detected in osteoblastic cells (at protein level). Detected in brain, and at lower levels in kidney, heart and lung.

It is found in the cell membrane. The protein localises to the photoreceptor inner segment. The catalysed reaction is D-glucose(out) = D-glucose(in). With respect to regulation, the uptake of glucose is inhibited by cytochalasin B. Glucose uptake is increased in response to phorbol ester 12-O-tetradecanoylphorbol-13-acetate (TPA) treatment: TPA-induced glucose uptake requires phosphorylation at Ser-226. Facilitative glucose transporter, which is responsible for constitutive or basal glucose uptake. Has a very broad substrate specificity; can transport a wide range of aldoses including both pentoses and hexoses. Most important energy carrier of the brain: present at the blood-brain barrier and assures the energy-independent, facilitative transport of glucose into the brain. In association with BSG and NXNL1, promotes retinal cone survival by increasing glucose uptake into photoreceptors. Required for mesendoderm differentiation. This Rattus norvegicus (Rat) protein is Solute carrier family 2, facilitated glucose transporter member 1.